Consider the following 185-residue polypeptide: Putative manganese efflux pump MntP (185 aa).

A run of 6 helical transmembrane segments spans residues 6–26 (IFIISVALAMDAFTIAVACGL), 41–61 (FHFGLFQALMPLLGWLAGLTV), 65–85 (VETYAPWISFFLLAFVGGKMI), 107–127 (LVFLSVATSLDALAVGLSFSI), 132–152 (IAFPCVMIGITALVLTSFGLW), and 164–184 (SHIAERIGGVVLILIGLKLLL).

The protein belongs to the MntP (TC 9.B.29) family.

It localises to the cell inner membrane. In terms of biological role, probably functions as a manganese efflux pump. This Maridesulfovibrio salexigens (strain ATCC 14822 / DSM 2638 / NCIMB 8403 / VKM B-1763) (Desulfovibrio salexigens) protein is Putative manganese efflux pump MntP.